The sequence spans 182 residues: Ribulose bisphosphate carboxylase small subunit, chloroplastic 1 (182 aa).

The transit peptide at Met-1–Glu-42 directs the protein to the chloroplast.

It belongs to the RuBisCO small chain family. In terms of assembly, heterohexadecamer of 8 large and 8 small subunits.

The protein localises to the plastid. Its subcellular location is the chloroplast. Its function is as follows. RuBisCO catalyzes two reactions: the carboxylation of D-ribulose 1,5-bisphosphate, the primary event in carbon dioxide fixation, as well as the oxidative fragmentation of the pentose substrate. Both reactions occur simultaneously and in competition at the same active site. Although the small subunit is not catalytic it is essential for maximal activity. The sequence is that of Ribulose bisphosphate carboxylase small subunit, chloroplastic 1 from Acetabularia acetabulum (Mermaid's wine glass).